Reading from the N-terminus, the 752-residue chain is Maltodextrin phosphorylase (752 aa).

Residue K603 is modified to N6-(pyridoxal phosphate)lysine.

The protein belongs to the glycogen phosphorylase family. Pyridoxal 5'-phosphate serves as cofactor.

The catalysed reaction is [(1-&gt;4)-alpha-D-glucosyl](n) + phosphate = [(1-&gt;4)-alpha-D-glucosyl](n-1) + alpha-D-glucose 1-phosphate. Functionally, phosphorylase is an important allosteric enzyme in carbohydrate metabolism. Enzymes from different sources differ in their regulatory mechanisms and in their natural substrates. However, all known phosphorylases share catalytic and structural properties. The protein is Maltodextrin phosphorylase (malP) of Streptococcus pneumoniae serotype 4 (strain ATCC BAA-334 / TIGR4).